A 174-amino-acid polypeptide reads, in one-letter code: Probable N-acetyltransferase Rv2775 (174 aa).

The region spanning 6–172 is the N-acetyltransferase domain; sequence IRIRAAKPID…VGYRLYRSAP (167 aa).

Belongs to the acetyltransferase family.

This Mycobacterium tuberculosis (strain ATCC 25618 / H37Rv) protein is Probable N-acetyltransferase Rv2775.